We begin with the raw amino-acid sequence, 156 residues long: Small ribosomal subunit protein uS7 (156 aa).

Belongs to the universal ribosomal protein uS7 family. As to quaternary structure, part of the 30S ribosomal subunit. Contacts proteins S9 and S11.

Its function is as follows. One of the primary rRNA binding proteins, it binds directly to 16S rRNA where it nucleates assembly of the head domain of the 30S subunit. Is located at the subunit interface close to the decoding center, probably blocks exit of the E-site tRNA. The sequence is that of Small ribosomal subunit protein uS7 from Streptococcus agalactiae serotype Ia (strain ATCC 27591 / A909 / CDC SS700).